We begin with the raw amino-acid sequence, 273 residues long: Translation initiation factor 2 subunit alpha (273 aa).

An S1 motif domain is found at 12-83 (GEFVVATVKN…EKGHIDLSLK (72 aa)).

The protein belongs to the eIF-2-alpha family. As to quaternary structure, heterotrimer composed of an alpha, a beta and a gamma chain.

Functionally, eIF-2 functions in the early steps of protein synthesis by forming a ternary complex with GTP and initiator tRNA. This Thermococcus gammatolerans (strain DSM 15229 / JCM 11827 / EJ3) protein is Translation initiation factor 2 subunit alpha.